The primary structure comprises 448 residues: Adenylosuccinate synthetase (448 aa).

Residues 22-28 and 50-52 each bind GTP; these read GDEGKGK and GHT. D23 serves as the catalytic Proton acceptor. Mg(2+)-binding residues include D23 and G50. Residues 23–26, 48–51, T139, R153, Q234, T249, and R321 contribute to the IMP site; these read DEGK and NAGH. H51 acts as the Proton donor in catalysis. Residue 317–323 coordinates substrate; the sequence is SVTGRPR. GTP is bound by residues R323, 349-351, and 431-433; these read KLD and STG.

This sequence belongs to the adenylosuccinate synthetase family. In terms of assembly, homodimer. The cofactor is Mg(2+).

It localises to the cytoplasm. The enzyme catalyses IMP + L-aspartate + GTP = N(6)-(1,2-dicarboxyethyl)-AMP + GDP + phosphate + 2 H(+). Its pathway is purine metabolism; AMP biosynthesis via de novo pathway; AMP from IMP: step 1/2. Functionally, plays an important role in the de novo pathway of purine nucleotide biosynthesis. Catalyzes the first committed step in the biosynthesis of AMP from IMP. In Burkholderia thailandensis (strain ATCC 700388 / DSM 13276 / CCUG 48851 / CIP 106301 / E264), this protein is Adenylosuccinate synthetase.